Reading from the N-terminus, the 118-residue chain is Small ribosomal subunit protein uS13 (118 aa).

Positions 94-118 (SLPVHGQRTKTNARTCKGPRKPIKK) are disordered.

It belongs to the universal ribosomal protein uS13 family. As to quaternary structure, part of the 30S ribosomal subunit. Forms a loose heterodimer with protein S19. Forms two bridges to the 50S subunit in the 70S ribosome.

In terms of biological role, located at the top of the head of the 30S subunit, it contacts several helices of the 16S rRNA. In the 70S ribosome it contacts the 23S rRNA (bridge B1a) and protein L5 of the 50S subunit (bridge B1b), connecting the 2 subunits; these bridges are implicated in subunit movement. Contacts the tRNAs in the A and P-sites. The sequence is that of Small ribosomal subunit protein uS13 from Buchnera aphidicola subsp. Acyrthosiphon pisum (strain 5A).